The following is a 580-amino-acid chain: Protein O-linked-mannose beta-1,4-N-acetylglucosaminyltransferase 2 (580 aa).

At 1 to 4 (MHLS) the chain is on the cytoplasmic side. A helical; Signal-anchor for type II membrane protein transmembrane segment spans residues 5 to 25 (AVFNALLVSVLAAVLWKHVRL). Over 26–580 (REHAATLEEE…PFADVLVCNT (555 aa)) the chain is Lumenal. 2 N-linked (GlcNAc...) asparagine glycosylation sites follow: Asn99 and Asn276. In terms of domain architecture, Fibronectin type-III spans 488 to 580 (ARCQASVHGA…PFADVLVCNT (93 aa)).

This sequence belongs to the glycosyltransferase 61 family. Highly expressed in the brain, muscle, heart, and kidney in both fetus and adult. In the brain, highest expression in the cortex and cerebellum. Highly expressed in the pancreas.

Its subcellular location is the endoplasmic reticulum membrane. It carries out the reaction 3-O-(alpha-D-mannosyl)-L-threonyl-[protein] + UDP-N-acetyl-alpha-D-glucosamine = 3-O-(N-acetyl-beta-D-glucosaminyl-(1-&gt;4)-alpha-D-mannosyl)-L-threonyl-[protein] + UDP + H(+). Its pathway is protein modification; protein glycosylation. Functionally, O-linked mannose beta-1,4-N-acetylglucosaminyltransferase that transfers UDP-N-acetyl-D-glucosamine to the 4-position of the mannose to generate N-acetyl-D-glucosamine-beta-1,4-O-D-mannosylprotein. Involved in the biosynthesis of the phosphorylated O-mannosyl trisaccharide (N-acetylgalactosamine-beta-3-N-acetylglucosamine-beta-4-(phosphate-6-)mannose), a carbohydrate structure present in alpha-dystroglycan (DAG1), which is required for binding laminin G-like domain-containing extracellular proteins with high affinity. This is Protein O-linked-mannose beta-1,4-N-acetylglucosaminyltransferase 2 (POMGNT2) from Homo sapiens (Human).